A 616-amino-acid polypeptide reads, in one-letter code: Protein cereblon (616 aa).

3 disordered regions span residues methionine 1–valine 39, phenylalanine 63–arginine 137, and serine 182–methionine 220. Residues alanine 11–valine 32 are compositionally biased toward low complexity. The segment covering serine 96–glutamate 107 has biased composition (acidic residues). Residues glutamine 183–aspartate 192 show a composition bias toward basic and acidic residues. The segment covering valine 194–leucine 203 has biased composition (acidic residues). Residues histidine 206–proline 215 show a composition bias toward pro residues. The Lon N-terminal domain occupies histidine 257–threonine 482. The 110-residue stretch at glutamate 481–lysine 590 folds into the CULT domain. Residues cysteine 486, cysteine 489, cysteine 555, and cysteine 558 each contribute to the Zn(2+) site.

This sequence belongs to the CRBN family. Likely a component of a DCX (DDB1-CUL4-X-box) protein ligase complex. May interact with pic/DDB1. Ubiquitinated.

It localises to the nucleus. It participates in protein modification; protein ubiquitination. Its function is as follows. Substrate recognition component of a DCX (DDB1-CUL4-X-box) E3 protein ligase complex that mediates the ubiquitination and subsequent proteasomal degradation of target proteins. Has an essential role in mediating growth by negatively regulating insulin signaling. It also has a role in maintaining presynaptic function in the neuromuscular junction synapses of third-instar larvae. The chain is Protein cereblon from Drosophila persimilis (Fruit fly).